Here is a 1294-residue protein sequence, read N- to C-terminus: ATPase PglY (1294 aa).

A disordered region spans residues 1205 to 1263 (TQAAATPPPAPAASQPTAGDLSLDTPTSDPRIPYTSQETPTSSGGAGTARTSGGRRTTA). A compositionally biased stretch (polar residues) spans 1228–1244 (DTPTSDPRIPYTSQETP). The span at 1252–1263 (TARTSGGRRTTA) shows a compositional bias: low complexity.

Functionally, BREX systems (bacteriophage exclusion) provide immunity against bacteriophage. Part of a type 2 BREX system. Previously called the phage growth limitation (Pgl) system, it confers protection against bacteriophage phiC31. The bacteria allows one cycle of phage infection, but subsequent cycles are impaired, protecting the original bacterial colony. The system undergoes high rates (10(-3) to 10(-4)) of phase reversion, i.e. loss and regain of phiC31 resistance. When the pglW-pglX-pglY-pglZ genes are transformed into a susceptible S.lividans (strain 1326) they confer resistance to infection by phage phiC31 and phiBT1; all 4 genes are necessary. Its function is as follows. Hydrolyzes ATP but not AMP, ADP, GMP, GDP or GTP; activity is inhibited by the non-hydrolyzable ATP analog 5-adenylyl beta,gamma-imidodiphosphate. This is ATPase PglY from Streptomyces coelicolor (strain ATCC BAA-471 / A3(2) / M145).